A 92-amino-acid polypeptide reads, in one-letter code: DNA-binding protein HU 1 (92 aa).

T4 is modified (phosphothreonine).

The protein belongs to the bacterial histone-like protein family. In terms of assembly, homodimer. (Microbial infection) Interacts with Bacillus phage SP01 Gp46; the interaction replaces dsDNA from the hbs-DNA complex.

It localises to the cytoplasm. The protein resides in the nucleoid. Functionally, histone-like DNA-binding protein which introduces negative supercoils in relaxed plasmid DNA in the presence of topoisomerase I. There are at least 20,000 monomers/cell. Capable of wrapping DNA to stabilize it, and thus to prevent its denaturation under extreme environmental conditions. Binds evenly across chromosome, does not display a preference for AT content. Binds ss- and dsDNA in a sequence non-specific manner; 8 nucleotides are sufficient to bind protein. The sequence is that of DNA-binding protein HU 1 from Bacillus subtilis (strain 168).